The chain runs to 156 residues: Arginine repressor (156 aa).

The protein belongs to the ArgR family.

It is found in the cytoplasm. Its pathway is amino-acid biosynthesis; L-arginine biosynthesis [regulation]. Regulates arginine biosynthesis genes. The sequence is that of Arginine repressor from Shigella boydii serotype 18 (strain CDC 3083-94 / BS512).